Reading from the N-terminus, the 319-residue chain is ATP-dependent 6-phosphofructokinase (319 aa).

Gly11 lines the ATP pocket. 21–25 (RAVTR) is an ADP binding site. ATP is bound by residues 72–73 (RF) and 102–105 (GDGS). Asp103 serves as a coordination point for Mg(2+). 125–127 (SID) contributes to the substrate binding site. Catalysis depends on Asp127, which acts as the Proton acceptor. Arg154 serves as a coordination point for ADP. Substrate-binding positions include Arg162 and 169–171 (MGR). Residues 185-187 (GAD) and 213-215 (KKH) each bind ADP. Residues Glu222, Arg243, and 249–252 (HMQR) contribute to the substrate site.

This sequence belongs to the phosphofructokinase type A (PFKA) family. ATP-dependent PFK group I subfamily. Prokaryotic clade 'B1' sub-subfamily. As to quaternary structure, homotetramer. Mg(2+) is required as a cofactor.

The protein localises to the cytoplasm. It catalyses the reaction beta-D-fructose 6-phosphate + ATP = beta-D-fructose 1,6-bisphosphate + ADP + H(+). It functions in the pathway carbohydrate degradation; glycolysis; D-glyceraldehyde 3-phosphate and glycerone phosphate from D-glucose: step 3/4. Its activity is regulated as follows. Allosterically activated by ADP and other diphosphonucleosides, and allosterically inhibited by phosphoenolpyruvate. Catalyzes the phosphorylation of D-fructose 6-phosphate to fructose 1,6-bisphosphate by ATP, the first committing step of glycolysis. The sequence is that of ATP-dependent 6-phosphofructokinase from Lactobacillus johnsonii (strain CNCM I-12250 / La1 / NCC 533).